Consider the following 180-residue polypeptide: Alkyl hydroperoxide reductase AhpD (180 aa).

C131 (proton donor) is an active-site residue. The cysteines at positions 131 and 134 are disulfide-linked. C134 acts as the Cysteine sulfenic acid (-SOH) intermediate in catalysis.

It belongs to the AhpD family.

It carries out the reaction N(6)-[(R)-dihydrolipoyl]-L-lysyl-[lipoyl-carrier protein] + a hydroperoxide = N(6)-[(R)-lipoyl]-L-lysyl-[lipoyl-carrier protein] + an alcohol + H2O. Antioxidant protein with alkyl hydroperoxidase activity. Required for the reduction of the AhpC active site cysteine residues and for the regeneration of the AhpC enzyme activity. This is Alkyl hydroperoxide reductase AhpD from Beijerinckia indica subsp. indica (strain ATCC 9039 / DSM 1715 / NCIMB 8712).